The sequence spans 299 residues: Phosphatidylinositol-3-phosphatase (299 aa).

Residues 1 to 43 (MLRGIQALSRPLTRVYRALAVIGVLAASLLASWVGAVPQVGLA) form the signal peptide.

In terms of assembly, monomer. SapM interacts with host RAB7 via its C-terminus. It depends on a metal cation as a cofactor.

It is found in the secreted. It localises to the host cytoplasmic vesicle. The protein resides in the host phagosome. The enzyme catalyses a phosphate monoester + H2O = an alcohol + phosphate. It carries out the reaction a 1,2-diacyl-sn-glycero-3-phospho-(1D-myo-inositol-3-phosphate) + H2O = a 1,2-diacyl-sn-glycero-3-phospho-(1D-myo-inositol) + phosphate. Its activity is regulated as follows. Phosphatase activity is inhibited in vitro by low concentrations of several heavy metals (zinc chloride, sodium molybdate, magnesium chloride, and copper sulfate) and moderately high concentrations (&gt;8 mM) of EDTA. Virulence factor that plays an important role in blocking phagosome-lysosome fusion and thus participates in the intracellular survival of the pathogen. Acts as a phosphatase that dephosphorylates phosphatidylinositol 3-phosphate (PI3P), a membrane trafficking regulatory lipid essential for phagosomal acquisition of lysosomal constituents. Therefore, SapM eliminates PI3P from the phagosomal membrane by catalyzing its hydrolysis, and thus contributes to inhibition of phagosome maturation. Also interferes with autophagy: SapM blocks autophagosome-lysosome fusion in macrophages by binding to the small GTPase RAB7, which prevents RAB7 from being involved in this process and thus negatively regulates autophagy flux. In vitro, displays phosphatase activity with broad specificity; can dephosphorylate a variety of phosphoester substrates, with the highest activity against phosphoenolpyruvate, glycerophosphate, GTP, NADPH, phosphotyrosine and trehalose-6-phosphate. In contrast, the enzyme exhibits poor activity against glucose-6-phosphate, phosphothreonine, and a number of nucleotides (NADP, ATP, AMP, and GMP). This is Phosphatidylinositol-3-phosphatase from Mycobacterium tuberculosis (strain ATCC 25618 / H37Rv).